The chain runs to 120 residues: Superoxide dismutase [Cu-Zn] (120 aa).

Cu cation-binding residues include H11, H13, and H28. The segment at 16–52 is disordered; the sequence is GDTTNGCMSTGPHFNPTGKEHGAPQDENRHAGDLGNI. C22 and C112 are joined by a disulfide. H28, H36, H45, and D48 together coordinate Zn(2+). A compositionally biased stretch (basic and acidic residues) spans 33–47; it reads GKEHGAPQDENRHAG. Cu cation is bound at residue H85.

The protein belongs to the Cu-Zn superoxide dismutase family. Homodimer. The cofactor is Cu cation. Zn(2+) serves as cofactor.

The protein resides in the cytoplasm. It catalyses the reaction 2 superoxide + 2 H(+) = H2O2 + O2. In terms of biological role, destroys radicals which are normally produced within the cells and which are toxic to biological systems. This Aspergillus japonicus protein is Superoxide dismutase [Cu-Zn] (sodC).